Reading from the N-terminus, the 561-residue chain is Arginine--tRNA ligase (561 aa).

The 'HIGH' region motif lies at 128 to 138 (ANPTGPLHVGH).

Belongs to the class-I aminoacyl-tRNA synthetase family. As to quaternary structure, monomer.

It localises to the cytoplasm. The enzyme catalyses tRNA(Arg) + L-arginine + ATP = L-arginyl-tRNA(Arg) + AMP + diphosphate. The polypeptide is Arginine--tRNA ligase (Methylibium petroleiphilum (strain ATCC BAA-1232 / LMG 22953 / PM1)).